The sequence spans 220 residues: Flavin-dependent thymidylate synthase (220 aa).

A ThyX domain is found at 1-208 (MKIDILDKGF…PWTFEAFLKY (208 aa)). FAD contacts are provided by residues T55, 78 to 81 (RHRI), and E86. DUMP-binding positions include 75-78 (QWFR), 86-90 (ELSGR), and R147. Residues 78–88 (RHRIASYNELS) carry the ThyX motif motif. Residues 163 to 165 (NAR) and N169 each bind FAD. R174 contributes to the dUMP binding site. R174 acts as the Involved in ionization of N3 of dUMP, leading to its activation in catalysis.

Belongs to the thymidylate synthase ThyX family. Homotetramer. FAD is required as a cofactor.

The enzyme catalyses dUMP + (6R)-5,10-methylene-5,6,7,8-tetrahydrofolate + NADPH + H(+) = dTMP + (6S)-5,6,7,8-tetrahydrofolate + NADP(+). The catalysed reaction is dUMP + formaldehyde + NADPH + H(+) = dTMP + NADP(+) + H2O. It functions in the pathway pyrimidine metabolism; dTTP biosynthesis. Its function is as follows. Catalyzes the reductive methylation of 2'-deoxyuridine-5'-monophosphate (dUMP or deoxyuridylate) to 2'-deoxythymidine-5'-monophosphate (dTMP or deoxythymidylate) while utilizing 5,10-methylenetetrahydrofolate (mTHF) as the methylene donor, and NAD(P)H and FADH(2) as the reductant. This reaction is a critical step in DNA biosynthesis. Can also use formaldehyde instead of mTHF as a direct methylene donor for dTMP synthesis. However, the tighter binding of ThyX to mTHF (KD of 4 uM) compared to formaldehyde (KD of 20 mM) confirms that methylene tetrahydrofolate acts as the biological carbon donor for ThyX, serving as a formaldehyde carrier/transporter and thus avoiding genotoxic effects. The protein is Flavin-dependent thymidylate synthase of Thermotoga maritima (strain ATCC 43589 / DSM 3109 / JCM 10099 / NBRC 100826 / MSB8).